The primary structure comprises 209 residues: A-type ATP synthase subunit D (209 aa).

Belongs to the V-ATPase D subunit family. As to quaternary structure, has multiple subunits with at least A(3), B(3), C, D, E, F, H, I and proteolipid K(x).

It is found in the cell membrane. Functionally, component of the A-type ATP synthase that produces ATP from ADP in the presence of a proton gradient across the membrane. The polypeptide is A-type ATP synthase subunit D (Methanosarcina acetivorans (strain ATCC 35395 / DSM 2834 / JCM 12185 / C2A)).